A 366-amino-acid chain; its full sequence is Phospho-N-acetylmuramoyl-pentapeptide-transferase (366 aa).

The next 10 helical transmembrane spans lie at 27–47 (AALF…IASL), 71–91 (TPTM…LLWA), 93–113 (LSSI…AIGF), 138–158 (FVIA…AGAA), 174–194 (LMLN…VGAG), 205–225 (GLAI…AYLA), 245–265 (LAVI…FNAP), 268–288 (AIFM…TVAV), 297–317 (VIIG…VFWF), and 343–363 (QVVI…LSTL).

Belongs to the glycosyltransferase 4 family. MraY subfamily. The cofactor is Mg(2+).

The protein localises to the cell inner membrane. It catalyses the reaction UDP-N-acetyl-alpha-D-muramoyl-L-alanyl-gamma-D-glutamyl-meso-2,6-diaminopimeloyl-D-alanyl-D-alanine + di-trans,octa-cis-undecaprenyl phosphate = di-trans,octa-cis-undecaprenyl diphospho-N-acetyl-alpha-D-muramoyl-L-alanyl-D-glutamyl-meso-2,6-diaminopimeloyl-D-alanyl-D-alanine + UMP. It functions in the pathway cell wall biogenesis; peptidoglycan biosynthesis. In terms of biological role, catalyzes the initial step of the lipid cycle reactions in the biosynthesis of the cell wall peptidoglycan: transfers peptidoglycan precursor phospho-MurNAc-pentapeptide from UDP-MurNAc-pentapeptide onto the lipid carrier undecaprenyl phosphate, yielding undecaprenyl-pyrophosphoryl-MurNAc-pentapeptide, known as lipid I. The chain is Phospho-N-acetylmuramoyl-pentapeptide-transferase from Sinorhizobium medicae (strain WSM419) (Ensifer medicae).